A 425-amino-acid chain; its full sequence is Glutamate-1-semialdehyde 2,1-aminomutase (425 aa).

N6-(pyridoxal phosphate)lysine is present on Lys-265.

Belongs to the class-III pyridoxal-phosphate-dependent aminotransferase family. HemL subfamily. In terms of assembly, homodimer. Pyridoxal 5'-phosphate is required as a cofactor.

The protein localises to the cytoplasm. It catalyses the reaction (S)-4-amino-5-oxopentanoate = 5-aminolevulinate. It functions in the pathway porphyrin-containing compound metabolism; protoporphyrin-IX biosynthesis; 5-aminolevulinate from L-glutamyl-tRNA(Glu): step 2/2. This Clostridium perfringens (strain ATCC 13124 / DSM 756 / JCM 1290 / NCIMB 6125 / NCTC 8237 / Type A) protein is Glutamate-1-semialdehyde 2,1-aminomutase.